The sequence spans 91 residues: Small ribosomal subunit protein bS20 (91 aa).

The protein belongs to the bacterial ribosomal protein bS20 family.

Its function is as follows. Binds directly to 16S ribosomal RNA. The chain is Small ribosomal subunit protein bS20 from Mycoplasma mobile (strain ATCC 43663 / 163K / NCTC 11711) (Mesomycoplasma mobile).